The following is a 78-amino-acid chain: D-alanyl carrier protein (78 aa).

A Carrier domain is found at 1–78 (MAFRENVLEI…MIITQLEALK (78 aa)). Ser-36 carries the O-(pantetheine 4'-phosphoryl)serine modification.

Belongs to the DltC family. In terms of processing, 4'-phosphopantetheine is transferred from CoA to a specific serine of apo-DCP.

The protein resides in the cytoplasm. The protein operates within cell wall biogenesis; lipoteichoic acid biosynthesis. In terms of biological role, carrier protein involved in the D-alanylation of lipoteichoic acid (LTA). The loading of thioester-linked D-alanine onto DltC is catalyzed by D-alanine--D-alanyl carrier protein ligase DltA. The DltC-carried D-alanyl group is further transferred to cell membrane phosphatidylglycerol (PG) by forming an ester bond, probably catalyzed by DltD. D-alanylation of LTA plays an important role in modulating the properties of the cell wall in Gram-positive bacteria, influencing the net charge of the cell wall. This is D-alanyl carrier protein from Listeria monocytogenes serotype 4b (strain CLIP80459).